An 836-amino-acid chain; its full sequence is Protein translocase subunit SecA (836 aa).

ATP-binding positions include glutamine 85, 103–107, and aspartate 492; that span reads GEGKT. Residues cysteine 820, cysteine 822, cysteine 831, and cysteine 832 each contribute to the Zn(2+) site.

The protein belongs to the SecA family. As to quaternary structure, monomer and homodimer. Part of the essential Sec protein translocation apparatus which comprises SecA, SecYEG and auxiliary proteins SecDF. Other proteins may also be involved. Zn(2+) is required as a cofactor.

The protein localises to the cell membrane. Its subcellular location is the cytoplasm. It carries out the reaction ATP + H2O + cellular proteinSide 1 = ADP + phosphate + cellular proteinSide 2.. In terms of biological role, part of the Sec protein translocase complex. Interacts with the SecYEG preprotein conducting channel. Has a central role in coupling the hydrolysis of ATP to the transfer of proteins into and across the cell membrane, serving as an ATP-driven molecular motor driving the stepwise translocation of polypeptide chains across the membrane. The polypeptide is Protein translocase subunit SecA (Clostridium botulinum (strain Eklund 17B / Type B)).